We begin with the raw amino-acid sequence, 204 residues long: MLHISALEKLVHELSRLPGIGPKTAQRLAYYILRTGNEYPERLSEALLRVKAEVHDCPTCFNYTDTDICRYCEDSHRSDESICVVEEPSDIMRIESSGAFRGRYHVLHGAISPLEGIGPKELKIKELIDRVEDGLSGTGPAIKEIILALDADLEGDTTILYLAKQLQGKGLKLSRIAHGVPIGSDIDFVDDRTMGRALQNRVEL.

The segment at 57 to 72 adopts a C4-type zinc-finger fold; it reads CPTCFNYTDTDICRYC. The Toprim domain maps to 80 to 181; it reads ESICVVEEPS…KLSRIAHGVP (102 aa).

It belongs to the RecR family.

In terms of biological role, may play a role in DNA repair. It seems to be involved in an RecBC-independent recombinational process of DNA repair. It may act with RecF and RecO. The chain is Recombination protein RecR from Bdellovibrio bacteriovorus (strain ATCC 15356 / DSM 50701 / NCIMB 9529 / HD100).